The primary structure comprises 285 residues: Pantothenate synthetase (285 aa).

30–37 (MGNLHDGH) is an ATP binding site. Residue His37 is the Proton donor of the active site. A (R)-pantoate-binding site is contributed by Gln61. A beta-alanine-binding site is contributed by Gln61. 149-152 (GEKD) is an ATP binding site. Gln155 is a (R)-pantoate binding site. Residues Ile178 and 186–189 (LSSR) contribute to the ATP site.

It belongs to the pantothenate synthetase family. In terms of assembly, homodimer.

The protein resides in the cytoplasm. It catalyses the reaction (R)-pantoate + beta-alanine + ATP = (R)-pantothenate + AMP + diphosphate + H(+). It participates in cofactor biosynthesis; (R)-pantothenate biosynthesis; (R)-pantothenate from (R)-pantoate and beta-alanine: step 1/1. Its function is as follows. Catalyzes the condensation of pantoate with beta-alanine in an ATP-dependent reaction via a pantoyl-adenylate intermediate. In Buchnera aphidicola subsp. Acyrthosiphon pisum (strain 5A), this protein is Pantothenate synthetase.